The following is a 195-amino-acid chain: Cholesin (195 aa).

The interval 1–78 is disordered; that stretch reads MAKHKRKGLE…KEEKKRLREA (78 aa). Composition is skewed to basic and acidic residues over residues 8–18 and 26–39; these read GLEGTGKESKR and ETPR…DKET. 3 positions are modified to phosphoserine: Ser-41, Ser-48, and Ser-52. Residues 53–77 are compositionally biased toward basic and acidic residues; that stretch reads PEERRVLERKLKKERKKEEKKRLRE. Ser-96 is subject to Phosphoserine.

As to expression, secreted via exosomes, secreted from the instestine, secretion is induced by feeding and cholesterol absorption. Expressed in enterocytes.

Its subcellular location is the secreted. Hormone secreted from the intestine in response to cholesterol, where it acts to inhibit cholesterol synthesis in the liver and VLDL secretion,leading to a reduction in circulating cholesterol levels. Acts through binding to its receptor, GPR146. This is Cholesin (Chlsn) from Mus musculus (Mouse).